A 127-amino-acid polypeptide reads, in one-letter code: Major sperm protein isoform beta (127 aa).

Alanine 2 carries the post-translational modification N-acetylalanine. Residues 9 to 126 (DINTQPGSKI…RRKNLPIEYN (118 aa)) enclose the MSP domain.

Forms filaments 10 nm wide, with a characteristic substructure repeating axially at 9 nm. In terms of tissue distribution, sperm.

It localises to the cell projection. The protein resides in the pseudopodium. Its subcellular location is the cytoplasm. It is found in the cytoskeleton. Central component in molecular interactions underlying sperm crawling. Forms an extensive filament system that extends from sperm villipoda, along the leading edge of the pseudopod. The protein is Major sperm protein isoform beta of Ascaris suum (Pig roundworm).